We begin with the raw amino-acid sequence, 393 residues long: Sugar efflux transporter B (393 aa).

12 helical membrane-spanning segments follow: residues 13 to 33 (FDLT…AGAL), 51 to 71 (AMVG…SQFL), 82 to 102 (KSLI…FAWN), 106 to 126 (FVLL…NPQM), 152 to 172 (VSLA…GFSF), 174 to 194 (VMYL…WLFL), 219 to 239 (LLLF…IINM), 253 to 273 (LAGV…LIAG), 283 to 303 (FLMR…LMAH), 306 to 326 (VILL…GGIG), 344 to 364 (LYTN…GIVA), and 366 to 386 (IWNY…TLFC).

It belongs to the major facilitator superfamily. Set transporter family.

The protein resides in the cell inner membrane. Its function is as follows. Involved in the efflux of sugars. The physiological role may be the detoxification of non-metabolizable sugar analogs. Can transport lactose and glucose. The protein is Sugar efflux transporter B (setB) of Escherichia coli (strain K12).